The following is a 260-amino-acid chain: Triosephosphate isomerase (260 aa).

11–13 (NWK) is a substrate binding site. H103 serves as the catalytic Electrophile. Residue E175 is the Proton acceptor of the active site. Substrate is bound by residues G181, S220, and 241–242 (GG).

Belongs to the triosephosphate isomerase family. In terms of assembly, homodimer.

The protein resides in the cytoplasm. The enzyme catalyses D-glyceraldehyde 3-phosphate = dihydroxyacetone phosphate. It functions in the pathway carbohydrate biosynthesis; gluconeogenesis. Its pathway is carbohydrate degradation; glycolysis; D-glyceraldehyde 3-phosphate from glycerone phosphate: step 1/1. Involved in the gluconeogenesis. Catalyzes stereospecifically the conversion of dihydroxyacetone phosphate (DHAP) to D-glyceraldehyde-3-phosphate (G3P). This Shewanella loihica (strain ATCC BAA-1088 / PV-4) protein is Triosephosphate isomerase.